The chain runs to 223 residues: Putative N-acetylmannosamine-6-phosphate 2-epimerase (223 aa).

Belongs to the NanE family.

The enzyme catalyses an N-acyl-D-glucosamine 6-phosphate = an N-acyl-D-mannosamine 6-phosphate. It participates in amino-sugar metabolism; N-acetylneuraminate degradation; D-fructose 6-phosphate from N-acetylneuraminate: step 3/5. Its function is as follows. Converts N-acetylmannosamine-6-phosphate (ManNAc-6-P) to N-acetylglucosamine-6-phosphate (GlcNAc-6-P). This Staphylococcus haemolyticus (strain JCSC1435) protein is Putative N-acetylmannosamine-6-phosphate 2-epimerase.